We begin with the raw amino-acid sequence, 137 residues long: Protein cornichon homolog 4 (137 aa).

The next 3 helical transmembrane spans lie at 8–28 (LISF…LVCL), 53–73 (FIVQ…FMTL), and 113–133 (LAYI…SALD).

It belongs to the cornichon family.

It localises to the membrane. The chain is Protein cornichon homolog 4 from Arabidopsis thaliana (Mouse-ear cress).